Here is a 150-residue protein sequence, read N- to C-terminus: Bcl-2-interacting killer (150 aa).

Residues 51-65 (VALRLACIGDEMDLC) carry the BH3 motif. Residues 127–147 (PGQLFPMVLLVFLLLGGAWYL) form a helical membrane-spanning segment. Residues 127 to 148 (PGQLFPMVLLVFLLLGGAWYLQ) form a leucine-zipper region.

As to quaternary structure, interacts with RHBDL4/RHBDD1. Interacts with BCL2L10/BCL-B. Proteolytically cleaved by RHBDL4/RHBDD1. RHBDL4/RHBDD1-induced cleavage is a necessary step prior its degradation by the proteosome-dependent mechanism. Post-translationally, ubiquitinated by the ECS(ASB11) complex in response to endoplasmic reticulum stress, leading to substrate recognition by the segregase p97/VCP and degradation by the proteasome. Expressed in testis, kidney, liver, lung and heart.

It localises to the endomembrane system. The protein localises to the mitochondrion membrane. Accelerates programmed cell death. Binding to the apoptosis repressors Bcl-X(L), BHRF1 or Bcl-2 suppresses this death-promoting activity. This is Bcl-2-interacting killer (Bik) from Mus musculus (Mouse).